Here is a 428-residue protein sequence, read N- to C-terminus: Citrate synthase (428 aa).

Catalysis depends on residues H265, H306, and D363.

Belongs to the citrate synthase family. Homohexamer.

It catalyses the reaction oxaloacetate + acetyl-CoA + H2O = citrate + CoA + H(+). Its pathway is carbohydrate metabolism; tricarboxylic acid cycle; isocitrate from oxaloacetate: step 1/2. Allosterically inhibited by NADH. This Pseudomonas aeruginosa (strain ATCC 15692 / DSM 22644 / CIP 104116 / JCM 14847 / LMG 12228 / 1C / PRS 101 / PAO1) protein is Citrate synthase (gltA).